We begin with the raw amino-acid sequence, 478 residues long: MSLLAFFLFTILVFSSSCCSATRFQGHRYMQRKTMLDLASKIGINYGRRGNNLPSPYQSINFIKSIKAGHVKLYDADPESLTLLSQTNLYVTITVPNHQITALSSNQTIADEWVRTNILPYYPQTQIRFVLVGNEILSYNSGNVSVNLVPAMRKIVNSLRLHGIHNIKVGTPLAMDSLRSSFPPSNGTFREEITGPVMLPLLKFLNGTNSYFFLNVHPYFRWSRNPMNTSLDFALFQGHSTYTDPQTGLVYRNLLDQMLDSVLFAMTKLGYPHMRLAISETGWPNFGDIDETGANILNAATYNRNLIKKMSASPPIGTPSRPGLPIPTFVFSLFNENQKSGSGTQRHWGILHPDGSPIYDVDFTGQTPLTGFNPLPKPTNNVPYKGQVWCVPVEGANETELEETLRMACAQSNTTCAALAPGRECYEPVSIYWHASYALNSYWAQFRNQSIQCFFNGLAHETTTNPGNDRCKFPSVTL.

The N-terminal stretch at 1 to 20 (MSLLAFFLFTILVFSSSCCS) is a signal peptide. The Proton donor role is filled by E135. Catalysis depends on E280, which acts as the Nucleophile. A disulfide bond links C390 and C453.

This sequence belongs to the glycosyl hydrolase 17 family. Contains two additional disulfide bonds, but it is unclear if they are between the pairs Cys-409-Cys-416 and Cys-425-Cys-471 or between the pairs Cys-409-Cys-471 and Cys-416-Cys-425. In terms of tissue distribution, anthers.

The enzyme catalyses Hydrolysis of (1-&gt;3)-beta-D-glucosidic linkages in (1-&gt;3)-beta-D-glucans.. Its function is as follows. Probable beta-1,3-glucanase that may be involved in the degradation of callose walls around the microspore tetrad during pollen development. May be required for pollen exine formation. The sequence is that of Probable glucan endo-1,3-beta-glucosidase A6 from Arabidopsis thaliana (Mouse-ear cress).